Reading from the N-terminus, the 501-residue chain is Cytochrome P450 monooxygeanse terP (501 aa).

Residues 2-22 (PSLLLSLLLLQVPIICAWLLV) form a helical membrane-spanning segment. A heme-binding site is contributed by C441.

Belongs to the cytochrome P450 family. Heme serves as cofactor.

It localises to the membrane. Its pathway is secondary metabolite biosynthesis. In terms of biological role, cytochrome P450 monooxygeanse; part of the gene cluster that mediates the biosynthesis of terpendoles, indole-diterpene (IDT) mycotoxins including terpendole I, terpendole K, terpendole C, as well as the kinesin Eg5 inhibitor terpendole E. TerP has dual activity and is able to convert terpendole E to 13-desoxyterpendole I and paspaline to 13-desoxypaxilline. Terpendoles biosynthesis begins with the synthesis of geranylgeranyl diphosphate (GGPP) by a yet unidentified GGPP synthase. Condensation of indole-3-glycerol phosphate with GGPP by the prenyltransferase terC then forms 3-geranylgeranylindole (3-GGI), followed by epoxidation and cyclization of this intermediate (by the FAD-dependent monooxygeanse terM and the terpene cyclase terB) to form paspaline. The cytochrome monooxygenase terQ then hydroxylates paspalline at C-11 to yield terpendole E. The cytochrome monooxygenase terP converts terpendole E to 13-desoxyterpendole I, and terQ converts 13-desoxyterpendole I into terpendole I. TerF and terK are required for conversion of terpendole I to terpendole C which is further converted to terpendole K. The polypeptide is Cytochrome P450 monooxygeanse terP (Tolypocladium album (Soil fungus)).